The following is a 226-amino-acid chain: MLTQQELKQQAADAALELVEQVAGPDVIIGVGTGSTADLFIDGLARFKGRLRGTVASSERSAARLAGHGLAVLDLNDVQSMPIYVDGADEIDPNLHMIKGGGGALTREKIVASVARRYICIADESKLVERLGRFPLPVEVIPMARNAVARGLSRLGGQPALREGFVTDNGNIILDVAGLSIADAPGLEKTINDIPGVVTCGLFALAGADVALLATQDGIRRLERRG.

Substrate-binding positions include 33-36, 86-89, and 99-102; these read TGST, DGAD, and KGGG. The active-site Proton acceptor is the Glu-108. Residue Lys-126 coordinates substrate.

Belongs to the ribose 5-phosphate isomerase family. Homodimer.

The enzyme catalyses aldehydo-D-ribose 5-phosphate = D-ribulose 5-phosphate. The protein operates within carbohydrate degradation; pentose phosphate pathway; D-ribose 5-phosphate from D-ribulose 5-phosphate (non-oxidative stage): step 1/1. Functionally, catalyzes the reversible conversion of ribose-5-phosphate to ribulose 5-phosphate. This is Ribose-5-phosphate isomerase A from Bordetella parapertussis (strain 12822 / ATCC BAA-587 / NCTC 13253).